The primary structure comprises 517 residues: 2,3-bisphosphoglycerate-independent phosphoglycerate mutase (517 aa).

The Mn(2+) site is built by Asp-14 and Ser-64. Ser-64 functions as the Phosphoserine intermediate in the catalytic mechanism. Residues His-125, 155 to 156 (RD), Arg-187, Arg-193, 263 to 266 (RSDR), and Lys-337 each bind substrate. Mn(2+)-binding residues include Asp-404, His-408, Asp-445, His-446, and His-464.

This sequence belongs to the BPG-independent phosphoglycerate mutase family. Monomer. Mn(2+) is required as a cofactor.

The catalysed reaction is (2R)-2-phosphoglycerate = (2R)-3-phosphoglycerate. It functions in the pathway carbohydrate degradation; glycolysis; pyruvate from D-glyceraldehyde 3-phosphate: step 3/5. In terms of biological role, catalyzes the interconversion of 2-phosphoglycerate and 3-phosphoglycerate. The protein is 2,3-bisphosphoglycerate-independent phosphoglycerate mutase of Nitrosococcus oceani (strain ATCC 19707 / BCRC 17464 / JCM 30415 / NCIMB 11848 / C-107).